A 145-amino-acid chain; its full sequence is 3-dehydroquinate dehydratase (145 aa).

Tyr-24 acts as the Proton acceptor in catalysis. Asn-76, His-82, and Asp-89 together coordinate substrate. His-102 (proton donor) is an active-site residue. Residues Val-103–Ser-104 and Arg-113 each bind substrate.

This sequence belongs to the type-II 3-dehydroquinase family. In terms of assembly, homododecamer.

It catalyses the reaction 3-dehydroquinate = 3-dehydroshikimate + H2O. The protein operates within metabolic intermediate biosynthesis; chorismate biosynthesis; chorismate from D-erythrose 4-phosphate and phosphoenolpyruvate: step 3/7. Functionally, catalyzes a trans-dehydration via an enolate intermediate. The polypeptide is 3-dehydroquinate dehydratase (Janthinobacterium sp. (strain Marseille) (Minibacterium massiliensis)).